A 129-amino-acid chain; its full sequence is Large ribosomal subunit protein bL19 (129 aa).

Belongs to the bacterial ribosomal protein bL19 family.

In terms of biological role, this protein is located at the 30S-50S ribosomal subunit interface and may play a role in the structure and function of the aminoacyl-tRNA binding site. In Methylobacillus flagellatus (strain ATCC 51484 / DSM 6875 / VKM B-1610 / KT), this protein is Large ribosomal subunit protein bL19.